Reading from the N-terminus, the 369-residue chain is N-methyltransferase imqF (369 aa).

It belongs to the methyltransferase superfamily.

It participates in secondary metabolite biosynthesis. Functionally, N-methyltransferase; part of the gene cluster that mediates the biosynthesis of imizoquins A to D, tripeptide-derived alkaloids that serve a protective role against oxidative stress that are essential for normal germination. ImqB is a canonical three-module NRPS that assembles the tripeptide backbone of the imizoquins via condensation of Trp, Tyr, and Leu-derived precursors. N-methylation by imqF and phenol oxidation by imqC, followed by cyclization via the FAD-dependent oxidase imqH carry out the three-step transformation of L-tyrosine into tetrahydroisoquinoline. Importantly, this sequence requires the presence of a free amine in the tyrosine moiety, indicating that isoquinoline formation occurs prior to peptide bond formation. The imidazolidin-4-one ring of imizoquins could form following additional oxidation of the methyl-derived bridgehead carbon by imqH. Lastly, O-methylation by imqG and leucine hydroxylation by imqE complete biosynthesis of the imizoquins. This is N-methyltransferase imqF from Aspergillus flavus (strain ATCC 200026 / FGSC A1120 / IAM 13836 / NRRL 3357 / JCM 12722 / SRRC 167).